The primary structure comprises 261 residues: Phosphatidylglycerol--prolipoprotein diacylglyceryl transferase (261 aa).

3 helical membrane-spanning segments follow: residues 20–40, 54–74, and 94–114; these read LAIH…VWLA, IIDF…LYYV, and GGGA…VFSY. Arg-139 provides a ligand contact to a 1,2-diacyl-sn-glycero-3-phospho-(1'-sn-glycerol). A run of 3 helical transmembrane segments spans residues 175 to 195, 205 to 225, and 235 to 255; these read MPTF…VMVF, GDIF…VEGM, and ARVS…LFIY.

This sequence belongs to the Lgt family.

The protein localises to the cell membrane. It catalyses the reaction L-cysteinyl-[prolipoprotein] + a 1,2-diacyl-sn-glycero-3-phospho-(1'-sn-glycerol) = an S-1,2-diacyl-sn-glyceryl-L-cysteinyl-[prolipoprotein] + sn-glycerol 1-phosphate + H(+). It functions in the pathway protein modification; lipoprotein biosynthesis (diacylglyceryl transfer). In terms of biological role, catalyzes the transfer of the diacylglyceryl group from phosphatidylglycerol to the sulfhydryl group of the N-terminal cysteine of a prolipoprotein, the first step in the formation of mature lipoproteins. The polypeptide is Phosphatidylglycerol--prolipoprotein diacylglyceryl transferase (Lactococcus lactis subsp. lactis (strain IL1403) (Streptococcus lactis)).